A 376-amino-acid polypeptide reads, in one-letter code: Methionine import ATP-binding protein MetN 1 (376 aa).

One can recognise an ABC transporter domain in the interval 34–273 (VRFINLGKTY…PQHEVSKTLL (240 aa)). An ATP-binding site is contributed by 70 to 77 (GRSGAGKS).

It belongs to the ABC transporter superfamily. Methionine importer (TC 3.A.1.24) family. The complex is composed of two ATP-binding proteins (MetN), two transmembrane proteins (MetI) and a solute-binding protein (MetQ).

It localises to the cell inner membrane. The enzyme catalyses L-methionine(out) + ATP + H2O = L-methionine(in) + ADP + phosphate + H(+). The catalysed reaction is D-methionine(out) + ATP + H2O = D-methionine(in) + ADP + phosphate + H(+). Part of the ABC transporter complex MetNIQ involved in methionine import. Responsible for energy coupling to the transport system. The chain is Methionine import ATP-binding protein MetN 1 from Pseudomonas syringae pv. tomato (strain ATCC BAA-871 / DC3000).